A 164-amino-acid polypeptide reads, in one-letter code: Inner membrane assembly complex subunit 17 (164 aa).

Residues 1-28 (MIKTAKISTLRLAITRNARNLSFTTLVR) constitute a mitochondrion transit peptide. At 29-97 (SPEVDNSKIK…NEVPLKRFTR (69 aa)) the chain is on the mitochondrial matrix side. Residues 98-118 (PLWIFILMASTFYLGAHLVWW) traverse the membrane as a helical segment. Topologically, residues 119 to 164 (KLAYEKKEVELKHKVDSLETTLKDVMKEKATGPTPCNNKKSWYKFW) are mitochondrial intermembrane. Residues 121–149 (AYEKKEVELKHKVDSLETTLKDVMKEKAT) are a coiled coil.

This sequence belongs to the INA17 family. Component of the inner membrane assembly (INA) complex, composed of INA17 and INA22. Interacts with a subset of F(1)F(0)-ATP synthase subunits of the F(1)-domain and the peripheral stalk.

Its subcellular location is the mitochondrion inner membrane. Functionally, component of the INA complex (INAC) that promotes the biogenesis of mitochondrial F(1)F(0)-ATP synthase. INAC facilitates the assembly of the peripheral stalk and promotes the assembly of the catalytic F(1)-domain with the membrane-embedded F(0)-domain. The protein is Inner membrane assembly complex subunit 17 of Candida glabrata (strain ATCC 2001 / BCRC 20586 / JCM 3761 / NBRC 0622 / NRRL Y-65 / CBS 138) (Yeast).